The chain runs to 41 residues: U-AITX-Bg1a (41 aa).

Disulfide bonds link C2-C35, C4-C28, and C18-C36.

This sequence belongs to the sea anemone type 3 (BDS) potassium channel toxin family.

The protein resides in the secreted. Its subcellular location is the nematocyst. Potently and selectively inhibits voltage-gated potassium channels Kv11/KCNH/ERG. Acts as a gating-modifier toxin that shifts the voltage-dependence of ERG activation in the positive direction and suppresses its current amplitudes elicited by strong depolarizing pulses that maximally activate the channels. The protein is U-AITX-Bg1a of Bunodosoma granuliferum (Red warty sea anemone).